The sequence spans 205 residues: Ribosomal RNA small subunit methyltransferase G (205 aa).

Residues G73, L78, 124–125 (VE), and R138 contribute to the S-adenosyl-L-methionine site.

This sequence belongs to the methyltransferase superfamily. RNA methyltransferase RsmG family.

It localises to the cytoplasm. It catalyses the reaction guanosine(527) in 16S rRNA + S-adenosyl-L-methionine = N(7)-methylguanosine(527) in 16S rRNA + S-adenosyl-L-homocysteine. Specifically methylates the N7 position of guanine in position 527 of 16S rRNA. This chain is Ribosomal RNA small subunit methyltransferase G, found in Actinobacillus pleuropneumoniae serotype 5b (strain L20).